A 1493-amino-acid polypeptide reads, in one-letter code: DNA excision repair protein ERCC-6 (1493 aa).

The segment at Met1–Gly39 is disordered. An N-terminal domain; essential for its chromatin remodeling activity region spans residues Met1–Tyr510. Polar residues predominate over residues His8 to Glu27. Ser10 is modified (phosphoserine; by ATM). Ser158 is subject to Phosphoserine; by CDK2. Lys170 carries the post-translational modification N6-methylated lysine; by EHMT2. A Glycyl lysine isopeptide (Lys-Gly) (interchain with G-Cter in SUMO3) cross-link involves residue Lys205. A Glycyl lysine isopeptide (Lys-Gly) (interchain with G-Cter in SUMO2) cross-link involves residue Lys255. Disordered regions lie at residues Lys287 to Lys323 and Gly344 to Arg453. Position 297 is an N6-methylated lysine; by EHMT2 (Lys297). Basic and acidic residues predominate over residues Arg353–Ala363. Acidic residues predominate over residues Glu364–Glu392. Phosphoserine occurs at positions 429 and 430. Position 448 is an N6-methylated lysine; by EHMT2 (Lys448). Phosphoserine is present on residues Ser486 and Ser489. In terms of domain architecture, Helicase ATP-binding spans Trp519 to Gly695. Asp532–Thr539 contributes to the ATP binding site. A DEAH box motif is present at residues Asp646 to His649. The Helicase C-terminal domain maps to Val843–Tyr1002. Disordered stretches follow at residues Pro1042–Ile1147, His1181–Asn1247, and Arg1318–Leu1384. Position 1054 is an N6-methylated lysine; by EHMT2 (Lys1054). Over residues Ile1123 to Pro1141 the composition is skewed to polar residues. Ser1142 bears the Phosphoserine mark. Residues Leu1200–Lys1210 are compositionally biased toward basic residues. 2 stretches are compositionally biased toward basic and acidic residues: residues His1211 to Arg1221 and Gln1232 to Asn1247. The segment covering Lys1327–Asn1336 has biased composition (basic residues). Residues Ser1337 to Glu1351 show a composition bias toward polar residues. Residue Ser1348 is modified to Phosphoserine. Residues Lys1352–Asp1376 are compositionally biased toward basic and acidic residues. Residues Ser1386–His1398 carry the CSA-interacting motif (CIM) motif. The segment at Ile1400–Leu1428 is ubiquitin-binding domain (UBD). Residues Val1429–Cys1493 form a winged-helix domain (WHD) region. Positions Ser1446–Cys1493 are essential for its interaction with RNA polymerase II, transcription-coupled nucleotide excision repair activity, association with chromatin after UV irradiation and for mediating the UV-induced translocation of ERRC8 to the nuclear matrix.

This sequence belongs to the SNF2/RAD54 helicase family. In terms of assembly, homodimer. Binds DNA. Interacts with ERCC8. Interacts with RNA polymerase II; interaction is enhanced by UV irradiation. Component of the B-WICH complex, at least composed of SMARCA5/SNF2H, BAZ1B/WSTF, SF3B1, DEK, MYO1C, ERCC6, MYBBP1A and DDX21. Interacts with KIAA1530/UVSSA. Interacts with ELOA and CUL5; the interaction is induced by DNA damaging agents or by inhibitors of RNA polymerase II elongation. Interacts (via WHD region) with RIF1. Interacts with SMARCC2/BAF170, SMARCB1/BAF47 and the neuron-specific chromatin remodeling complex (nBAF complex). Interacts with ERCC5/XPG (via C-terminus); the interaction stimulates ERCC6/CSB binding to the DNA repair bubble and ERCC6/CSB ATPase activity. May form a complex composed of RNA polymerase II, ERCC6/CSB and ERCC5/XPG which associates with the DNA repair bubble during transcription-coupled nucleotide excision repair. Interacts with CAND1, CSTF1, DDX3X, DDX5, DDX17, DDX23, DHX36, HDAC1, HNRNPU, MTA2, PRPF3, PSMD3, RBBP4, SFPQ, SMARCA1, SMARCA2, TOP1, USP7, XRCC5, COPS3, COPS4, COPS6, DDX1, DDX41, GATAD2A, GATAD2B, PRPF4, PSMC5, SF3B2, CTR9, NONO, PSMD12 and TOP2A. Post-translationally, phosphorylated in a cell cycle-dependent manner at Ser-158 by cyclin A-CDK2 and at Ser-10 by ATM in response to DNA damage. Phosphorylation at these two sites promotes the intramolecular interaction of the N-terminal domain with the helicase ATP-binding domain, thereby probably releasing the inhibitory effect of the N-terminal domain on its ATPase activity. Phosphorylation is essential for its chromatin remodeling activity. In terms of processing, ubiquitinated at the C-terminus. Ubiquitination by the CSA complex leads to ERCC6 proteasomal degradation in a UV-dependent manner. Stabilized following interaction with KIAA1530/UVSSA, which promotes recruitment of deubiquitinating enzyme USP7, leading to deubiquitination of ERCC6 thereby preventing UV-induced degradation of ERCC6 by the proteasome. Sumoylation at Lys-205 in an UV-radiation-dependent manner is essential for its transcription-coupled nucleotide excision repair activity.

The protein resides in the nucleus. It localises to the chromosome. The catalysed reaction is ATP + H2O = ADP + phosphate + H(+). Essential factor involved in transcription-coupled nucleotide excision repair (TC-NER), a process during which RNA polymerase II-blocking lesions are rapidly removed from the transcribed strand of active genes. Plays a central role in the initiation of the TC-NER process: specifically recognizes and binds RNA polymerase II stalled at a lesion, and mediates recruitment of ERCC8/CSA, initiating DNA damage excision by TFIIH recruitment. Upon DNA-binding, it locally modifies DNA conformation by wrapping the DNA around itself, thereby modifying the interface between stalled RNA polymerase II and DNA. Acts as a chromatin remodeler at DSBs; DNA-dependent ATPase-dependent activity is essential for this function. Plays an important role in regulating the choice of the DNA double-strand breaks (DSBs) repair pathway and G2/M checkpoint activation; DNA-dependent ATPase activity is essential for this function. Regulates the DNA repair pathway choice by inhibiting non-homologous end joining (NHEJ), thereby promoting the homologous recombination (HR)-mediated repair of DSBs during the S/G2 phases of the cell cycle. Mediates the activation of the ATM- and CHEK2-dependent DNA damage responses thus preventing premature entry of cells into mitosis following the induction of DNA DSBs. Remodels chromatin by evicting histones from chromatin flanking DSBs, limiting RIF1 accumulation at DSBs thereby promoting BRCA1-mediated HR. Required for stable recruitment of ELOA and CUL5 to DNA damage sites. Also involved in UV-induced translocation of ERCC8 to the nuclear matrix. Essential for neuronal differentiation and neuritogenesis; regulates transcription and chromatin remodeling activities required during neurogenesis. The protein is DNA excision repair protein ERCC-6 of Homo sapiens (Human).